The primary structure comprises 242 residues: MSIQLNGINCFYGAHQALFDITLDCPQGETLVLLGPSGAGKSSLLRVLNLLEMPRSGTLNIAGNHFDFTKTPSDKAIRDLRRNVGMVFQQYNLWPHLTVQQNLIEAPCRVLGLSKDQALARAEKLLERLRLKPYSDRYPLHLSGGQQQRVAIARALMMEPQVLLFDEPTAALDPEITAQIVSIIRELAETNITQVIVTHEVEVARKTASRVVYMENGHIVEQGDASCFTEPQTEAFKNYLSH.

Residues 3–241 (IQLNGINCFY…QTEAFKNYLS (239 aa)) enclose the ABC transporter domain. Position 35 to 42 (35 to 42 (GPSGAGKS)) interacts with ATP.

Belongs to the ABC transporter superfamily. The complex is composed of two ATP-binding proteins (ArtP), two transmembrane proteins (ArtM and ArtQ) and two solute-binding proteins (ArtJ and ArtI).

The protein resides in the cell inner membrane. It carries out the reaction a polar amino acid(out) + ATP + H2O = a polar amino acid(in) + ADP + phosphate + H(+). The enzyme catalyses L-arginine(out) + ATP + H2O = L-arginine(in) + ADP + phosphate + H(+). In terms of biological role, part of the ABC transporter complex ArtPIQMJ involved in arginine transport. Probably responsible for energy coupling to the transport system. This Escherichia coli O157:H7 protein is Arginine transport ATP-binding protein ArtP (artP).